Consider the following 102-residue polypeptide: Monothiol glutaredoxin-S8 (102 aa).

The Glutaredoxin domain occupies 1-101 (MEKIQKMISE…PMLKRFGALW (101 aa)). C21 is a [2Fe-2S] cluster binding site. Positions 99-102 (ALWL) match the Responsive for interaction with TGA factors motif.

The protein belongs to the glutaredoxin family. CC-type subfamily.

The protein resides in the cytoplasm. It is found in the nucleus. Functionally, may only reduce GSH-thiol disulfides, but not protein disulfides. The sequence is that of Monothiol glutaredoxin-S8 (GRXS8) from Arabidopsis thaliana (Mouse-ear cress).